Reading from the N-terminus, the 214-residue chain is 7-cyano-7-deazaguanine synthase (214 aa).

10–20 (FSGGQDSTTCL) is an ATP binding site. Positions 184, 193, 196, and 199 each coordinate Zn(2+).

This sequence belongs to the QueC family. Homodimer. The cofactor is Zn(2+).

It catalyses the reaction 7-carboxy-7-deazaguanine + NH4(+) + ATP = 7-cyano-7-deazaguanine + ADP + phosphate + H2O + H(+). The protein operates within purine metabolism; 7-cyano-7-deazaguanine biosynthesis. Catalyzes the ATP-dependent conversion of 7-carboxy-7-deazaguanine (CDG) to 7-cyano-7-deazaguanine (preQ(0)). The protein is 7-cyano-7-deazaguanine synthase of Exiguobacterium sp. (strain ATCC BAA-1283 / AT1b).